Reading from the N-terminus, the 600-residue chain is NADH-quinone oxidoreductase subunit C/D (600 aa).

Residues 1–190 are NADH dehydrogenase I subunit C; the sequence is MVNNMTDLTA…SPFELTKAKQ (190 aa). Residues 214 to 600 form an NADH dehydrogenase I subunit D region; the sequence is DFMFLNLGPN…IDFVMSDVDR (387 aa).

This sequence in the N-terminal section; belongs to the complex I 30 kDa subunit family. It in the C-terminal section; belongs to the complex I 49 kDa subunit family. In terms of assembly, NDH-1 is composed of 13 different subunits. Subunits NuoB, CD, E, F, and G constitute the peripheral sector of the complex.

It localises to the cell inner membrane. It catalyses the reaction a quinone + NADH + 5 H(+)(in) = a quinol + NAD(+) + 4 H(+)(out). Functionally, NDH-1 shuttles electrons from NADH, via FMN and iron-sulfur (Fe-S) centers, to quinones in the respiratory chain. The immediate electron acceptor for the enzyme in this species is believed to be ubiquinone. Couples the redox reaction to proton translocation (for every two electrons transferred, four hydrogen ions are translocated across the cytoplasmic membrane), and thus conserves the redox energy in a proton gradient. The chain is NADH-quinone oxidoreductase subunit C/D from Escherichia coli O6:H1 (strain CFT073 / ATCC 700928 / UPEC).